The following is a 530-amino-acid chain: Probable flavin-containing monooxygenase 1 (530 aa).

Residues 17–21 (GAGVS), E38, 46–47 (VW), and 58–59 (QS) contribute to the FAD site. NADP(+) is bound at residue 219 to 222 (SAID).

The protein belongs to the FMO family. FAD is required as a cofactor.

Required for the establishment of systemic acquired resistance (SAR). Not involved in local defense mechanisms. Confers a salicylic acid-dependent (SA) resistance to virulent pathogens such as P.syringae pv tomato and H.parasitica. This chain is Probable flavin-containing monooxygenase 1 (FMO1), found in Arabidopsis thaliana (Mouse-ear cress).